The chain runs to 248 residues: Ubiquinone/menaquinone biosynthesis C-methyltransferase UbiE (248 aa).

S-adenosyl-L-methionine is bound by residues Ser-68, Asp-92, and 120–121 (NA).

This sequence belongs to the class I-like SAM-binding methyltransferase superfamily. MenG/UbiE family.

The catalysed reaction is a 2-demethylmenaquinol + S-adenosyl-L-methionine = a menaquinol + S-adenosyl-L-homocysteine + H(+). The enzyme catalyses a 2-methoxy-6-(all-trans-polyprenyl)benzene-1,4-diol + S-adenosyl-L-methionine = a 5-methoxy-2-methyl-3-(all-trans-polyprenyl)benzene-1,4-diol + S-adenosyl-L-homocysteine + H(+). It functions in the pathway quinol/quinone metabolism; menaquinone biosynthesis; menaquinol from 1,4-dihydroxy-2-naphthoate: step 2/2. Its pathway is cofactor biosynthesis; ubiquinone biosynthesis. Functionally, methyltransferase required for the conversion of demethylmenaquinol (DMKH2) to menaquinol (MKH2) and the conversion of 2-polyprenyl-6-methoxy-1,4-benzoquinol (DDMQH2) to 2-polyprenyl-3-methyl-6-methoxy-1,4-benzoquinol (DMQH2). The sequence is that of Ubiquinone/menaquinone biosynthesis C-methyltransferase UbiE from Rickettsia typhi (strain ATCC VR-144 / Wilmington).